The following is a 397-amino-acid chain: Acetate kinase (397 aa).

Asn-8 serves as a coordination point for Mg(2+). Position 15 (Lys-15) interacts with ATP. Residue Arg-89 participates in substrate binding. Residue Asp-146 is the Proton donor/acceptor of the active site. ATP is bound by residues His-206–Gly-210, Asp-281–Arg-283, and Gly-329–Asn-333. Glu-382 serves as a coordination point for Mg(2+).

It belongs to the acetokinase family. As to quaternary structure, homodimer. Requires Mg(2+) as cofactor. Mn(2+) serves as cofactor.

It localises to the cytoplasm. It catalyses the reaction acetate + ATP = acetyl phosphate + ADP. The protein operates within metabolic intermediate biosynthesis; acetyl-CoA biosynthesis; acetyl-CoA from acetate: step 1/2. Its function is as follows. Catalyzes the formation of acetyl phosphate from acetate and ATP. Can also catalyze the reverse reaction. This is Acetate kinase from Bacillus thuringiensis subsp. konkukian (strain 97-27).